The following is a 349-amino-acid chain: Protein BPS1, chloroplastic (349 aa).

The transit peptide at 1 to 43 directs the protein to the chloroplast; it reads MARPQDPPRGFFPFGNPFKNLSSKNSVLSSKLLPLLNNFETNL.

Expressed in roots, hypocotyls, cotyledons, leaves, flowers and siliques.

The protein localises to the plastid. It localises to the chloroplast. Its function is as follows. Required for normal root and shoot development. Prevents constitutive production of a root mobile carotenoid-derived signaling compound that is capable of arresting shoot and leaf development. The polypeptide is Protein BPS1, chloroplastic (Arabidopsis thaliana (Mouse-ear cress)).